Consider the following 1697-residue polypeptide: SAC3 family protein B (1697 aa).

Disordered stretches follow at residues 54–134 (PPAS…QPGG), 167–280 (QRPN…SRSN), 306–413 (EATR…EQAR), and 491–512 (ESERGERERKGDLDHYERVDGD). A compositionally biased stretch (low complexity) spans 120-134 (QNPSPSSGQPYQPGG). Over residues 178–192 (DGSRNFLKDHGEHSR) the composition is skewed to basic and acidic residues. Over residues 193–202 (ATSPPATSHI) the composition is skewed to polar residues. Residues 215–227 (RSQDSKRKSRSDI) show a composition bias toward basic and acidic residues. 3 stretches are compositionally biased toward polar residues: residues 233-243 (MGFSRRNQSPV), 257-280 (PLSSRTWMRSPSSAENNPVRSRSN), and 335-380 (RFST…SPAT). One can recognise a PCI domain in the interval 625–813 (NIEQMNKTSV…KCSKLVHMKK (189 aa)).

It belongs to the SAC3 family. Interacts with SAC3A, EER5 and CML19. Interacts with UCH1 and UCH2.

The protein localises to the nucleus. In terms of biological role, component of the TREX-2 complex (transcription and export complex 2), a muliprotein complex that functions in docking export-competent ribonucleoprotein particles (mRNPs) to the nuclear entrance of the nuclear pore complex (nuclear basket). TREX-2 participates in mRNA export and accurate chromatin positioning in the nucleus by tethering genes to the nuclear periphery. The polypeptide is SAC3 family protein B (Arabidopsis thaliana (Mouse-ear cress)).